A 22-amino-acid polypeptide reads, in one-letter code: Phospholipase A2 (22 aa).

The protein belongs to the phospholipase A2 family. Group II subfamily. Ca(2+) is required as a cofactor. In terms of processing, seven disulfide bonds are present. In terms of tissue distribution, expressed by the venom gland.

The protein resides in the secreted. The enzyme catalyses a 1,2-diacyl-sn-glycero-3-phosphocholine + H2O = a 1-acyl-sn-glycero-3-phosphocholine + a fatty acid + H(+). Its function is as follows. Snake venom phospholipase A2 (PLA2) that inhibits neuromuscular transmission by blocking acetylcholine release from the nerve termini. PLA2 catalyzes the calcium-dependent hydrolysis of the 2-acyl groups in 3-sn-phosphoglycerides. This is Phospholipase A2 from Daboia siamensis (Eastern Russel's viper).